The following is an 831-amino-acid chain: Glucan 1,3-beta-glucosidase D (831 aa).

Residues 1-21 are compositionally biased toward basic and acidic residues; that stretch reads MPSQSRSRDRYGRDSDRDRSR. Disordered regions lie at residues 1–246 and 261–288; these read MPSQ…RGQS and APDM…SDGS. At 1–300 the chain is on the cytoplasmic side; sequence MPSQSRSRDR…LTPFWKRKKW (300 aa). The segment covering 32-41 has biased composition (acidic residues); it reads EDDDDDDDFD. Basic and acidic residues-rich tracts occupy residues 42-70, 78-94, and 151-177; these read DNPR…HDDY, EPRR…ERAR, and DAAR…HKST. Positions 178–195 are enriched in low complexity; the sequence is DSSNSSAGLLNANALAKL. 2 stretches are compositionally biased toward basic and acidic residues: residues 197 to 216 and 275 to 286; these read AQHE…EAKA and PPRERRWEKDSD. A helical; Signal-anchor for type II membrane protein transmembrane segment spans residues 301-321; sequence WWIGAIVLVIVVIIIVVAVVV. At 322–831 the chain is on the extracellular side; that stretch reads SNNKKSDSDS…PSFGNLPEYY (510 aa). The segment at 325–360 is disordered; the sequence is KKSDSDSDSDSNSGSSDSWGGDKSSLNGLDHDSIPK. Residues 334–350 are compositionally biased toward low complexity; it reads DSNSGSSDSWGGDKSSL. N-linked (GlcNAc...) asparagine glycosylation is found at Asn379, Asn396, and Asn547. Glu598 serves as the catalytic Proton donor. N-linked (GlcNAc...) asparagine glycans are attached at residues Asn611, Asn637, Asn670, and Asn690. The active-site Nucleophile is Glu703.

The protein belongs to the glycosyl hydrolase 5 (cellulase A) family.

The protein resides in the cell membrane. It carries out the reaction Successive hydrolysis of beta-D-glucose units from the non-reducing ends of (1-&gt;3)-beta-D-glucans, releasing alpha-glucose.. Its function is as follows. Glucosidase involved in the degradation of cellulosic biomass. Active on lichenan. This Emericella nidulans (strain FGSC A4 / ATCC 38163 / CBS 112.46 / NRRL 194 / M139) (Aspergillus nidulans) protein is Glucan 1,3-beta-glucosidase D (exgD).